Here is a 246-residue protein sequence, read N- to C-terminus: Orotidine 5'-phosphate decarboxylase (246 aa).

Substrate is bound by residues aspartate 22, lysine 44, 71 to 80, threonine 130, arginine 191, glutamine 201, glycine 221, and arginine 222; that span reads DLKYHDIPHT. Residue lysine 73 is the Proton donor of the active site.

Belongs to the OMP decarboxylase family. Type 1 subfamily. As to quaternary structure, homodimer.

The catalysed reaction is orotidine 5'-phosphate + H(+) = UMP + CO2. It participates in pyrimidine metabolism; UMP biosynthesis via de novo pathway; UMP from orotate: step 2/2. Functionally, catalyzes the decarboxylation of orotidine 5'-monophosphate (OMP) to uridine 5'-monophosphate (UMP). In Neisseria meningitidis serogroup B (strain ATCC BAA-335 / MC58), this protein is Orotidine 5'-phosphate decarboxylase.